Here is a 186-residue protein sequence, read N- to C-terminus: Peptidyl-tRNA hydrolase (186 aa).

TRNA is bound at residue tyrosine 13. The active-site Proton acceptor is histidine 18. TRNA-binding residues include tyrosine 59, asparagine 61, and asparagine 107.

This sequence belongs to the PTH family. As to quaternary structure, monomer.

The protein localises to the cytoplasm. The enzyme catalyses an N-acyl-L-alpha-aminoacyl-tRNA + H2O = an N-acyl-L-amino acid + a tRNA + H(+). Its function is as follows. Hydrolyzes ribosome-free peptidyl-tRNAs (with 1 or more amino acids incorporated), which drop off the ribosome during protein synthesis, or as a result of ribosome stalling. Functionally, catalyzes the release of premature peptidyl moieties from peptidyl-tRNA molecules trapped in stalled 50S ribosomal subunits, and thus maintains levels of free tRNAs and 50S ribosomes. This is Peptidyl-tRNA hydrolase from Thermotoga maritima (strain ATCC 43589 / DSM 3109 / JCM 10099 / NBRC 100826 / MSB8).